Here is a 154-residue protein sequence, read N- to C-terminus: Large-conductance mechanosensitive channel (154 aa).

A run of 3 helical transmembrane segments spans residues 14–34 (VMDL…VTSL), 38–58 (IITP…LFIN), and 81–101 (GLFL…FIVI).

This sequence belongs to the MscL family. In terms of assembly, homopentamer.

It localises to the cell membrane. In terms of biological role, channel that opens in response to stretch forces in the membrane lipid bilayer. May participate in the regulation of osmotic pressure changes within the cell. This Brevibacillus brevis (strain 47 / JCM 6285 / NBRC 100599) protein is Large-conductance mechanosensitive channel.